A 435-amino-acid polypeptide reads, in one-letter code: NADH-quinone oxidoreductase subunit D (435 aa).

Belongs to the complex I 49 kDa subunit family. As to quaternary structure, NDH-1 is composed of 14 different subunits. Subunits NuoB, C, D, E, F, and G constitute the peripheral sector of the complex.

The protein localises to the cell inner membrane. It catalyses the reaction a quinone + NADH + 5 H(+)(in) = a quinol + NAD(+) + 4 H(+)(out). NDH-1 shuttles electrons from NADH, via FMN and iron-sulfur (Fe-S) centers, to quinones in the respiratory chain. The immediate electron acceptor for the enzyme in this species is believed to be ubiquinone. Couples the redox reaction to proton translocation (for every two electrons transferred, four hydrogen ions are translocated across the cytoplasmic membrane), and thus conserves the redox energy in a proton gradient. The chain is NADH-quinone oxidoreductase subunit D from Xanthomonas campestris pv. campestris (strain 8004).